Here is a 141-residue protein sequence, read N- to C-terminus: ATP synthase epsilon chain (141 aa).

It belongs to the ATPase epsilon chain family. As to quaternary structure, F-type ATPases have 2 components, CF(1) - the catalytic core - and CF(0) - the membrane proton channel. CF(1) has five subunits: alpha(3), beta(3), gamma(1), delta(1), epsilon(1). CF(0) has three main subunits: a, b and c.

It is found in the cell inner membrane. In terms of biological role, produces ATP from ADP in the presence of a proton gradient across the membrane. The protein is ATP synthase epsilon chain of Bordetella avium (strain 197N).